A 74-amino-acid polypeptide reads, in one-letter code: Antimicrobial peptide HsAp2 (74 aa).

The signal sequence occupies residues 1–21 (MSRRLILILVLVAMLVKTMAG). Residues 22–33 (MESKWVETTYEI) constitute a propeptide that is removed on maturation. Position 65 is a proline amide (Pro65). The propeptide occupies 69–74 (AISEQT).

The protein belongs to the non-disulfide-bridged peptide (NDBP) superfamily. Medium-length antimicrobial peptide (group 3) family. In terms of tissue distribution, expressed by the venom gland.

The protein resides in the secreted. Its subcellular location is the target cell membrane. In terms of biological role, possesses antimicrobial activity against both Gram-negative and Gram-positive bacteria, as well as against the fungus C.tropicalis. Also possesses a relatively high hemolytic activity. May act by disrupting the integrity of the bacterial cell membrane. The protein is Antimicrobial peptide HsAp2 of Heterometrus spinifer (Asia giant forest scorpion).